The primary structure comprises 407 residues: Actinorhodin polyketide putative beta-ketoacyl synthase 2 (407 aa).

One can recognise a Ketosynthase family 3 (KS3) domain in the interval 1 to 402 (MSVLITGVGV…GFNSAAVLRR (402 aa)).

Belongs to the thiolase-like superfamily. Beta-ketoacyl-ACP synthases family.

This Streptomyces coelicolor (strain ATCC BAA-471 / A3(2) / M145) protein is Actinorhodin polyketide putative beta-ketoacyl synthase 2.